The following is a 242-amino-acid chain: Venom redulysin 2 (242 aa).

Positions 1–19 (MSKIWILLLLVGAVQFARG) are cleaved as a signal peptide. Positions 20-46 (FPALEEEQEDDVIDWPSFEYDLSDEER) are excised as a propeptide.

Belongs to the redulysin-like family. In terms of processing, contains 5 disulfide bonds. As to expression, expressed by the venom gland (posterior main gland) (at protein level).

The protein localises to the secreted. Highly abundant protein that may be responsible for the observed disruption of sensory neuron membranes, since it is homologous to proteins such as trialysin, which forms pores in lipid bilayers. Probable insecticidal toxin. The protein is Venom redulysin 2 of Platymeris rhadamanthus (Red spot assassin bug).